Reading from the N-terminus, the 225-residue chain is Fibronectin type III domain-containing protein 10 (225 aa).

Residues 1–19 (MRAPPLLLLLAACAPPSGA) form the signal peptide. Topologically, residues 20 to 181 (AVDPTPPGWE…FTAEPAAMQE (162 aa)) are extracellular. Residues 72–167 (LASAGGSLRA…ELAAAPPELA (96 aa)) enclose the Fibronectin type-III domain. N-linked (GlcNAc...) asparagine glycans are attached at residues N86 and N109. The helical transmembrane segment at 182 to 202 (IVVAMTAVGGSICVMLVVICL) threads the bilayer. Over 203-225 (LVAYITENLMHPTFRRPSLRRQP) the chain is Cytoplasmic.

It is found in the membrane. In Rattus norvegicus (Rat), this protein is Fibronectin type III domain-containing protein 10 (Fndc10).